Consider the following 103-residue polypeptide: Small ribosomal subunit protein uS10 (103 aa).

The protein belongs to the universal ribosomal protein uS10 family. As to quaternary structure, part of the 30S ribosomal subunit.

Functionally, involved in the binding of tRNA to the ribosomes. This is Small ribosomal subunit protein uS10 from Laribacter hongkongensis (strain HLHK9).